Consider the following 288-residue polypeptide: POU domain class 2-associating factor 2 (288 aa).

An OCA domain is found at Lys-10–Gly-32. Disordered stretches follow at residues Asp-24–Gln-52 and Pro-247–Asp-274. Residues Ser-35–Ser-48 are compositionally biased toward low complexity.

This sequence belongs to the POU2AF family. Interacts with POU2F3 (via the POU domain) in a DNA-dependent manner; this interaction recruits POU2AF2 to chromatin and increases POU2F3 transactivation activity. As to expression, expressed in tuft cells of colon mucosa, as well as in small intestine and thymus.

It is found in the cytoplasm. The protein resides in the cytosol. The protein localises to the nucleus. In terms of biological role, transcriptional coactivator of POU2F3. This complex drives the development of tuft cells, a rare chemosensory cells that coordinate immune and neural functions within mucosal epithelial tissues. In Homo sapiens (Human), this protein is POU domain class 2-associating factor 2.